We begin with the raw amino-acid sequence, 431 residues long: Homeobox protein knotted-1-like 3 (431 aa).

Residues 15 to 47 form a disordered region; that stretch reads NHFTDQHQPPPPQPPPPPPQQQQHFQEAPPPNW. The span at 22–34 shows a compositional bias: pro residues; the sequence is QPPPPQPPPPPPQ. An ELK domain is found at 322-342; it reads ELKHELKQGYKEKIVDIREEI. The segment at residues 343 to 406 is a DNA-binding region (homeobox; TALE-type); that stretch reads LRKRRAGKLP…NQRKRNWHSN (64 aa). Residues 402 to 431 are disordered; it reads NWHSNPSSSTVLKNKRKSNAGDNSGRERFA. A compositionally biased stretch (polar residues) spans 404–413; that stretch reads HSNPSSSTVL.

This sequence belongs to the TALE/KNOX homeobox family. As to quaternary structure, may form heterodimeric complex with the TALE/BELL proteins. Interacts with OFP1, OFP2, OFP4, OFP12 and OFP14. Interacts with KNATM-B.

The protein localises to the nucleus. The sequence is that of Homeobox protein knotted-1-like 3 (KNAT3) from Arabidopsis thaliana (Mouse-ear cress).